The primary structure comprises 570 residues: Glycine--tRNA ligase (570 aa).

2 residues coordinate substrate: Arg-99 and Glu-165. Residues 197-199 (RNE), 207-212 (LRLREF), 324-325 (EC), and 443-446 (GIDR) contribute to the ATP site. Position 212–216 (212–216 (FTQAE)) interacts with substrate. Substrate is bound at residue 439–443 (EPSFG).

Belongs to the class-II aminoacyl-tRNA synthetase family.

It localises to the cytoplasm. The enzyme catalyses tRNA(Gly) + glycine + ATP = glycyl-tRNA(Gly) + AMP + diphosphate. In terms of biological role, catalyzes the attachment of glycine to tRNA(Gly). The protein is Glycine--tRNA ligase of Thermococcus kodakarensis (strain ATCC BAA-918 / JCM 12380 / KOD1) (Pyrococcus kodakaraensis (strain KOD1)).